Here is a 224-residue protein sequence, read N- to C-terminus: Cell division protein SepF (224 aa).

Residues 21 to 78 (DDYYEDDDRGPAPRGYRRPREDRFEDEGYAPRGYDGHPEDRRRDYDEPPAYRAGLAGG) form a disordered region. Basic and acidic residues predominate over residues 54–66 (YDGHPEDRRRDYD).

It belongs to the SepF family. Homodimer. Interacts with FtsZ.

It localises to the cytoplasm. Cell division protein that is part of the divisome complex and is recruited early to the Z-ring. Probably stimulates Z-ring formation, perhaps through the cross-linking of FtsZ protofilaments. Its function overlaps with FtsA. The chain is Cell division protein SepF from Mycolicibacterium gilvum (strain PYR-GCK) (Mycobacterium gilvum (strain PYR-GCK)).